Here is an 89-residue protein sequence, read N- to C-terminus: UPF0367 protein PCC8801_1959 (89 aa).

The protein belongs to the UPF0367 family.

In Rippkaea orientalis (strain PCC 8801 / RF-1) (Cyanothece sp. (strain PCC 8801)), this protein is UPF0367 protein PCC8801_1959.